A 176-amino-acid polypeptide reads, in one-letter code: ATP synthase subunit delta (176 aa).

It belongs to the ATPase delta chain family. In terms of assembly, F-type ATPases have 2 components, F(1) - the catalytic core - and F(0) - the membrane proton channel. F(1) has five subunits: alpha(3), beta(3), gamma(1), delta(1), epsilon(1). F(0) has three main subunits: a(1), b(2) and c(10-14). The alpha and beta chains form an alternating ring which encloses part of the gamma chain. F(1) is attached to F(0) by a central stalk formed by the gamma and epsilon chains, while a peripheral stalk is formed by the delta and b chains.

It localises to the cell inner membrane. Functionally, f(1)F(0) ATP synthase produces ATP from ADP in the presence of a proton or sodium gradient. F-type ATPases consist of two structural domains, F(1) containing the extramembraneous catalytic core and F(0) containing the membrane proton channel, linked together by a central stalk and a peripheral stalk. During catalysis, ATP synthesis in the catalytic domain of F(1) is coupled via a rotary mechanism of the central stalk subunits to proton translocation. In terms of biological role, this protein is part of the stalk that links CF(0) to CF(1). It either transmits conformational changes from CF(0) to CF(1) or is implicated in proton conduction. This chain is ATP synthase subunit delta, found in Aliarcobacter butzleri (strain RM4018) (Arcobacter butzleri).